The primary structure comprises 1027 residues: Transient-receptor-potential-like protein (1027 aa).

Positions 1-22 (MTKEGMLSAAGRRFSRCAPSPR) are disordered. ANK repeat units lie at residues 85-115 (MGRT…RIGN), 117-141 (LLCA…ITRE), and 163-192 (SDIS…SIEK). The next 6 membrane-spanning stretches (helical) occupy residues 355 to 375 (FFLY…YILM), 391 to 411 (FFYY…ATFE), 473 to 493 (FLMI…YYIF), 516 to 536 (VAEA…IYLF), 559 to 579 (FCFI…QLYW), and 640 to 660 (MFIM…IAMM). 2 disordered regions span residues 825–929 (KRDI…TYTS) and 1008–1027 (ENVK…NVEK). A compositionally biased stretch (acidic residues) spans 855–874 (EESEEDDKSDETSSTDEEAD). The segment covering 910 to 923 (RASEADSKLPDRPL) has biased composition (basic and acidic residues). Polar residues predominate over residues 1008 to 1017 (ENVKSPSPAS).

This sequence belongs to the transient receptor (TC 1.A.4) family. STrpC subfamily.

Its subcellular location is the membrane. In terms of biological role, could mediate calcium entry and form a calcium permeant channel. In Caenorhabditis elegans, this protein is Transient-receptor-potential-like protein (trp-1).